We begin with the raw amino-acid sequence, 176 residues long: Adenine phosphoribosyltransferase (176 aa).

The protein belongs to the purine/pyrimidine phosphoribosyltransferase family. As to quaternary structure, homodimer.

It is found in the cytoplasm. The catalysed reaction is AMP + diphosphate = 5-phospho-alpha-D-ribose 1-diphosphate + adenine. It functions in the pathway purine metabolism; AMP biosynthesis via salvage pathway; AMP from adenine: step 1/1. Catalyzes a salvage reaction resulting in the formation of AMP, that is energically less costly than de novo synthesis. The chain is Adenine phosphoribosyltransferase from Roseobacter denitrificans (strain ATCC 33942 / OCh 114) (Erythrobacter sp. (strain OCh 114)).